The chain runs to 336 residues: Anthranilate phosphoribosyltransferase (336 aa).

5-phospho-alpha-D-ribose 1-diphosphate is bound by residues Gly-83, 86 to 87 (GD), Thr-91, 93 to 96 (NIST), 111 to 119 (KHGNRSVSS), and Ser-123. Residue Gly-83 participates in anthranilate binding. Ser-95 is a Mg(2+) binding site. An anthranilate-binding site is contributed by Asn-114. Arg-169 serves as a coordination point for anthranilate. Residues Asp-227 and Glu-228 each coordinate Mg(2+).

It belongs to the anthranilate phosphoribosyltransferase family. In terms of assembly, homodimer. It depends on Mg(2+) as a cofactor.

It catalyses the reaction N-(5-phospho-beta-D-ribosyl)anthranilate + diphosphate = 5-phospho-alpha-D-ribose 1-diphosphate + anthranilate. The protein operates within amino-acid biosynthesis; L-tryptophan biosynthesis; L-tryptophan from chorismate: step 2/5. Catalyzes the transfer of the phosphoribosyl group of 5-phosphorylribose-1-pyrophosphate (PRPP) to anthranilate to yield N-(5'-phosphoribosyl)-anthranilate (PRA). The sequence is that of Anthranilate phosphoribosyltransferase from Vibrio campbellii (strain ATCC BAA-1116).